The following is a 271-amino-acid chain: Phosphate import ATP-binding protein PstB 1 (271 aa).

The 242-residue stretch at 25–266 folds into the ABC transporter domain; it reads LTVEHLNLYY…PTQRRTEDYI (242 aa). Position 57-64 (57-64) interacts with ATP; that stretch reads GPSGCGKS.

It belongs to the ABC transporter superfamily. Phosphate importer (TC 3.A.1.7) family. As to quaternary structure, the complex is composed of two ATP-binding proteins (PstB), two transmembrane proteins (PstC and PstA) and a solute-binding protein (PstS).

The protein localises to the cell inner membrane. The enzyme catalyses phosphate(out) + ATP + H2O = ADP + 2 phosphate(in) + H(+). Its function is as follows. Part of the ABC transporter complex PstSACB involved in phosphate import. Responsible for energy coupling to the transport system. In Pectobacterium atrosepticum (strain SCRI 1043 / ATCC BAA-672) (Erwinia carotovora subsp. atroseptica), this protein is Phosphate import ATP-binding protein PstB 1.